The following is a 622-amino-acid chain: Threonine--tRNA ligase (622 aa).

The tract at residues 1–141 is editing domain; it reads MKTLLIHSDY…SRKITTERKE (141 aa). The segment at 199–498 is catalytic; that stretch reads PHVKYIKEKE…TLENRPPALP (300 aa). Cys291, His343, and His467 together coordinate Zn(2+).

This sequence belongs to the class-II aminoacyl-tRNA synthetase family. As to quaternary structure, homodimer. Zn(2+) is required as a cofactor.

The protein resides in the cytoplasm. It catalyses the reaction tRNA(Thr) + L-threonine + ATP = L-threonyl-tRNA(Thr) + AMP + diphosphate + H(+). Catalyzes the attachment of threonine to tRNA(Thr) in a two-step reaction: L-threonine is first activated by ATP to form Thr-AMP and then transferred to the acceptor end of tRNA(Thr). Also edits incorrectly charged L-seryl-tRNA(Thr). The protein is Threonine--tRNA ligase of Methanococcus maripaludis (strain C6 / ATCC BAA-1332).